Consider the following 767-residue polypeptide: Probable ubiquitin carboxyl-terminal hydrolase creB (767 aa).

Positions 49-462 (YGMENYGNTC…CAYVLFYQET (414 aa)) constitute a USP domain. The Nucleophile role is filled by Cys-58. Disordered stretches follow at residues 107–140 (EAEA…DSPE) and 232–263 (ASKQ…KTPN). Residues 250 to 263 (SVDQSSSTGSKTPN) are compositionally biased toward polar residues. Catalysis depends on His-413, which acts as the Proton acceptor. Residues 490 to 767 (LKQNGFPQSP…LRKKSFSILS (278 aa)) form a disordered region. Low complexity-rich tracts occupy residues 540–554 (ESAP…SPLS) and 564–573 (ERVTTVATPP). The stretch at 574–641 (KNDALAKKER…ASKAEEDRRL (68 aa)) forms a coiled coil. The segment covering 577 to 650 (ALAKKERARE…LSHENGKEKQ (74 aa)) has biased composition (basic and acidic residues). Basic residues predominate over residues 656-667 (RLKRGSKSLSHR). The span at 690–700 (STLSQTGPTSE) shows a compositional bias: polar residues. A compositionally biased stretch (low complexity) spans 701 to 713 (QQQQQQQQQQQQQ). A compositionally biased stretch (basic and acidic residues) spans 731–749 (TIREDEQVNHKDSKHERTG). Basic residues predominate over residues 750 to 767 (HGKWRSFSLRKKSFSILS).

This sequence belongs to the peptidase C19 family. In terms of assembly, interacts with creA, creC and qutD.

It catalyses the reaction Thiol-dependent hydrolysis of ester, thioester, amide, peptide and isopeptide bonds formed by the C-terminal Gly of ubiquitin (a 76-residue protein attached to proteins as an intracellular targeting signal).. Functionally, ubiquitin thioesterase component of the regulatory network controlling carbon source utilization through ubiquitination and deubiquitination involving creA, creB, creC, creD and acrB. Deubiquitinates the creA catabolic repressor and the quinate permease qutD. Also plays a role in response to carbon starvation and the control of extracellular proteases activity. This Aspergillus fumigatus (strain CBS 144.89 / FGSC A1163 / CEA10) (Neosartorya fumigata) protein is Probable ubiquitin carboxyl-terminal hydrolase creB (creB).